A 61-amino-acid polypeptide reads, in one-letter code: Disintegrin rubistatin (61 aa).

Residues 1 to 61 enclose the Disintegrin domain; the sequence is NPCCDAATCK…ADCPRNGLYG (61 aa). Disulfide bonds link Cys-3-Cys-26, Cys-17-Cys-23, Cys-22-Cys-47, and Cys-35-Cys-54. The Cell attachment site; atypical (MVD) motif lies at 39–41; sequence MVD.

The protein belongs to the venom metalloproteinase (M12B) family. P-II subfamily. P-IIa sub-subfamily. As to quaternary structure, monomer. In terms of tissue distribution, expressed by the venom gland.

It localises to the secreted. Functionally, recombinant disintegrin rubistatin inhibits ADP-induced platelet aggregation. In addition, it strongly induces apoptosis, and inhibits cell migration and proliferation of the human cancer cell line SK-Mel-28. The polypeptide is Disintegrin rubistatin (Crotalus ruber ruber (Red diamond rattlesnake)).